The sequence spans 209 residues: MSGIKRTASSNRWMLEHFDDHYVKLAQKMGLRSRAAFKLEEIQQKDQLIRPGMTVVDLGAAPGGWSQVAVKLAGDRGKVIACDILPMDPIVGVDFLQGDFREDKVLQALLTRVGDAKVDVVLSDMAPNMSGSDSVDQPRAMYLVELALDMCHQVLAPNGCFAVKVFQGEGFDEYMKAVKAVFKVVKTRKPDSSRARSREVYLVATGYKL.

5 residues coordinate S-adenosyl-L-methionine: glycine 63, tryptophan 65, aspartate 83, aspartate 99, and aspartate 124. Catalysis depends on lysine 164, which acts as the Proton acceptor.

This sequence belongs to the class I-like SAM-binding methyltransferase superfamily. RNA methyltransferase RlmE family.

The protein resides in the cytoplasm. The enzyme catalyses uridine(2552) in 23S rRNA + S-adenosyl-L-methionine = 2'-O-methyluridine(2552) in 23S rRNA + S-adenosyl-L-homocysteine + H(+). In terms of biological role, specifically methylates the uridine in position 2552 of 23S rRNA at the 2'-O position of the ribose in the fully assembled 50S ribosomal subunit. In Shewanella baltica (strain OS223), this protein is Ribosomal RNA large subunit methyltransferase E.